A 193-amino-acid chain; its full sequence is Potassium-transporting ATPase KdpC subunit (193 aa).

Residues 14–34 traverse the membrane as a helical segment; the sequence is ITFTFLVLCGLVYPLIVTGIA.

Belongs to the KdpC family. The system is composed of three essential subunits: KdpA, KdpB and KdpC.

The protein localises to the cell membrane. Functionally, part of the high-affinity ATP-driven potassium transport (or Kdp) system, which catalyzes the hydrolysis of ATP coupled with the electrogenic transport of potassium into the cytoplasm. This subunit acts as a catalytic chaperone that increases the ATP-binding affinity of the ATP-hydrolyzing subunit KdpB by the formation of a transient KdpB/KdpC/ATP ternary complex. In Bacillus cereus (strain G9842), this protein is Potassium-transporting ATPase KdpC subunit.